The chain runs to 107 residues: MKDLAQIMQQAQAMQAKMAEVQQKIENTEADGVAGAGLVRVKLRGKGELISVTIDKSLMGDDPEIVEDLIKAAHSDARKRLDQAMEDAMKTATAGFGGMLPGFKLPF.

This sequence belongs to the YbaB/EbfC family. In terms of assembly, homodimer.

It localises to the cytoplasm. It is found in the nucleoid. Binds to DNA and alters its conformation. May be involved in regulation of gene expression, nucleoid organization and DNA protection. This chain is Nucleoid-associated protein HNE_0371, found in Hyphomonas neptunium (strain ATCC 15444).